The chain runs to 593 residues: DEAD-box ATP-dependent RNA helicase 18 (593 aa).

The Q motif signature appears at 16 to 44 (FSDLEPPLSGDIIEALNQSDFEFCTPVQA). The region spanning 47–226 (IPLLCSYKDV…KAGLRNPVRV (180 aa)) is the Helicase ATP-binding domain. 60–67 (AATGSGKT) contacts ATP. The DEAD box motif lies at 174–177 (DEAD). Residues 264-411 (QLVDLLIKNS…ERKCSEDASD (148 aa)) enclose the Helicase C-terminal domain. Positions 506–524 (QRQQNLQVRKEKRQEEKKE) are enriched in basic and acidic residues. Positions 506–561 (QRQQNLQVRKEKRQEEKKEKGKRKRVDASASNDPKKASRKLTGKQRQTIQTAEDEE) are disordered.

This sequence belongs to the DEAD box helicase family. DDX55/SPB4 subfamily.

The enzyme catalyses ATP + H2O = ADP + phosphate + H(+). This is DEAD-box ATP-dependent RNA helicase 18 (RH18) from Arabidopsis thaliana (Mouse-ear cress).